The following is an 870-amino-acid chain: Adhesin AWP1 (870 aa).

The signal sequence occupies residues 1-18 (MSLITIFAFFIKATLVLS). A glycan (N-linked (GlcNAc...) asparagine) is linked at N224. A disulfide bridge connects residues C284 and C322. The tract at residues 329–835 (ITPSSSVEPS…TRQTSVIAPG (507 aa)) is disordered. Residues 331–566 (PSSSVEPSSS…SSSAVVPTSS (236 aa)) are compositionally biased toward low complexity. Over residues 567-576 (AGGGNGGDNG) the composition is skewed to gly residues. The span at 577–641 (QPGADGQPGA…PGAAGQPGAA (65 aa)) shows a compositional bias: low complexity. Residues 642–652 (GQPGAGSGGGS) are compositionally biased toward gly residues. N669 is a glycosylation site (N-linked (GlcNAc...) asparagine). The span at 675–721 (SGTGNGQAGSGQAGSGQVGSGQAGAGQAGSGQAGAGQAGSGQAGAGQ) shows a compositional bias: gly residues. Polar residues-rich tracts occupy residues 724-735 (LDNTASGQSEGG) and 792-801 (GSGTDQSSGR).

The protein resides in the secreted. It is found in the cell wall. Its function is as follows. May play a role in cell adhesion. This is Adhesin AWP1 from Candida glabrata (strain ATCC 2001 / BCRC 20586 / JCM 3761 / NBRC 0622 / NRRL Y-65 / CBS 138) (Yeast).